Here is a 397-residue protein sequence, read N- to C-terminus: Elongation factor Tu (397 aa).

Residues 10–207 (KPHVNVGTIG…TLDSYIPEPV (198 aa)) enclose the tr-type G domain. Positions 19–26 (GHVDHGKT) are G1. 19 to 26 (GHVDHGKT) provides a ligand contact to GTP. T26 serves as a coordination point for Mg(2+). The interval 60 to 64 (GITIN) is G2. A Phosphotyrosine modification is found at Y77. The G3 stretch occupies residues 81–84 (DCPG). 81–85 (DCPGH) serves as a coordination point for GTP. Position 88 is a phosphotyrosine (Y88). 136-139 (NKAD) contacts GTP. Positions 136-139 (NKAD) are G4. The segment at 174–176 (SAL) is G5.

It belongs to the TRAFAC class translation factor GTPase superfamily. Classic translation factor GTPase family. EF-Tu/EF-1A subfamily. As to quaternary structure, monomer.

The protein resides in the cytoplasm. It catalyses the reaction GTP + H2O = GDP + phosphate + H(+). GTP hydrolase that promotes the GTP-dependent binding of aminoacyl-tRNA to the A-site of ribosomes during protein biosynthesis. The protein is Elongation factor Tu of Pseudomonas aeruginosa (strain UCBPP-PA14).